A 318-amino-acid polypeptide reads, in one-letter code: Acetyl-coenzyme A carboxylase carboxyl transferase subunit alpha (318 aa).

The CoA carboxyltransferase C-terminal domain maps to 36 to 293 (EIDRLKEKST…KTRLSEQLDQ (258 aa)).

This sequence belongs to the AccA family. As to quaternary structure, acetyl-CoA carboxylase is a heterohexamer composed of biotin carboxyl carrier protein (AccB), biotin carboxylase (AccC) and two subunits each of ACCase subunit alpha (AccA) and ACCase subunit beta (AccD).

It is found in the cytoplasm. The enzyme catalyses N(6)-carboxybiotinyl-L-lysyl-[protein] + acetyl-CoA = N(6)-biotinyl-L-lysyl-[protein] + malonyl-CoA. It functions in the pathway lipid metabolism; malonyl-CoA biosynthesis; malonyl-CoA from acetyl-CoA: step 1/1. Functionally, component of the acetyl coenzyme A carboxylase (ACC) complex. First, biotin carboxylase catalyzes the carboxylation of biotin on its carrier protein (BCCP) and then the CO(2) group is transferred by the carboxyltransferase to acetyl-CoA to form malonyl-CoA. This Teredinibacter turnerae (strain ATCC 39867 / T7901) protein is Acetyl-coenzyme A carboxylase carboxyl transferase subunit alpha.